The sequence spans 476 residues: Aspartyl/glutamyl-tRNA(Asn/Gln) amidotransferase subunit B (476 aa).

It belongs to the GatB/GatE family. GatB subfamily. As to quaternary structure, heterotrimer of A, B and C subunits.

The enzyme catalyses L-glutamyl-tRNA(Gln) + L-glutamine + ATP + H2O = L-glutaminyl-tRNA(Gln) + L-glutamate + ADP + phosphate + H(+). It catalyses the reaction L-aspartyl-tRNA(Asn) + L-glutamine + ATP + H2O = L-asparaginyl-tRNA(Asn) + L-glutamate + ADP + phosphate + 2 H(+). Its function is as follows. Allows the formation of correctly charged Asn-tRNA(Asn) or Gln-tRNA(Gln) through the transamidation of misacylated Asp-tRNA(Asn) or Glu-tRNA(Gln) in organisms which lack either or both of asparaginyl-tRNA or glutaminyl-tRNA synthetases. The reaction takes place in the presence of glutamine and ATP through an activated phospho-Asp-tRNA(Asn) or phospho-Glu-tRNA(Gln). This Albidiferax ferrireducens (strain ATCC BAA-621 / DSM 15236 / T118) (Rhodoferax ferrireducens) protein is Aspartyl/glutamyl-tRNA(Asn/Gln) amidotransferase subunit B.